The following is a 538-amino-acid chain: Mitochondria-eating protein (538 aa).

The segment at methionine 1 to arginine 273 is interaction with YWHAG/14-3-3 protein gamma. Serine 85 is subject to Phosphoserine. A disordered region spans residues glycine 92–glutamine 137. Residues phenylalanine 106–glutamine 122 are compositionally biased toward basic and acidic residues. Coiled coils occupy residues aspartate 118–arginine 186 and glutamine 220–arginine 256. Residues glutamine 123–glutamine 137 show a composition bias toward polar residues. A phosphoserine mark is found at serine 156 and serine 159. Disordered stretches follow at residues leucine 174–serine 227 and lysine 247–lysine 292. 2 stretches are compositionally biased toward basic and acidic residues: residues glutamate 181–glutamate 209 and arginine 216–serine 227. Positions arginine 253–serine 278 are enriched in low complexity. Residues serine 285, serine 287, and serine 509 each carry the phosphoserine modification.

The protein belongs to the MIEAP family. As to quaternary structure, interacts (via coiled-coil domains) with BNIP3L (via BH3 domain). Interacts (via coiled-coil domains) with BNIP3 (via BH3 domain). Interacts with YWHAG/14-3-3 protein gamma; a protein that also plays a role in MALM.

It localises to the cytoplasm. Its subcellular location is the cytosol. The protein resides in the mitochondrion outer membrane. It is found in the mitochondrion matrix. Functionally, key regulator of mitochondrial quality that mediates the repairing or degradation of unhealthy mitochondria in response to mitochondrial damage. Mediator of mitochondrial protein catabolic process (also named MALM) by mediating the degradation of damaged proteins inside mitochondria by promoting the accumulation in the mitochondrial matrix of hydrolases that are characteristic of the lysosomal lumen. Also involved in mitochondrion degradation of damaged mitochondria by promoting the formation of vacuole-like structures (named MIV), which engulf and degrade unhealthy mitochondria by accumulating lysosomes. The physical interaction of SPATA18/MIEAP, BNIP3 and BNIP3L/NIX at the mitochondrial outer membrane regulates the opening of a pore in the mitochondrial double membrane in order to mediate the translocation of lysosomal proteins from the cytoplasm to the mitochondrial matrix. Binds cardiolipin. May form molecular condensates (non-membrane-bounded organelles) within mitochondria that compartmentalize and promote cardiolipin metabolism. This chain is Mitochondria-eating protein (SPATA18), found in Macaca fascicularis (Crab-eating macaque).